The primary structure comprises 443 residues: Enolase (443 aa).

(2R)-2-phosphoglycerate is bound at residue Gln167. Glu209 serves as the catalytic Proton donor. Mg(2+) contacts are provided by Asp246, Glu291, and Asp318. Residues Lys343, Arg372, Ser373, and Lys394 each coordinate (2R)-2-phosphoglycerate. Lys343 functions as the Proton acceptor in the catalytic mechanism.

Belongs to the enolase family. Component of the RNA degradosome, a multiprotein complex involved in RNA processing and mRNA degradation. The cofactor is Mg(2+).

It is found in the cytoplasm. Its subcellular location is the secreted. The protein resides in the cell surface. It catalyses the reaction (2R)-2-phosphoglycerate = phosphoenolpyruvate + H2O. It functions in the pathway carbohydrate degradation; glycolysis; pyruvate from D-glyceraldehyde 3-phosphate: step 4/5. Catalyzes the reversible conversion of 2-phosphoglycerate (2-PG) into phosphoenolpyruvate (PEP). It is essential for the degradation of carbohydrates via glycolysis. The chain is Enolase from Wigglesworthia glossinidia brevipalpis.